Here is a 668-residue protein sequence, read N- to C-terminus: Macrolide export ATP-binding/permease protein MacB 1/2 (668 aa).

Positions 9-247 (IRLRGVGREY…PGPGPAQAPQ (239 aa)) constitute an ABC transporter domain. Residue 45–52 (GASGSGKS) coordinates ATP. Residues 230-257 (RTGAPAADPGPGPAQAPQPAPQPAPVQA) form a disordered region. Residues 237–255 (DPGPGPAQAPQPAPQPAPV) are compositionally biased toward pro residues. A run of 4 helical transmembrane segments spans residues 294–314 (FLTM…VALG), 541–561 (LALL…IGVM), 598–618 (LVCV…GLAF), and 634–654 (MLAA…LPAV).

The protein belongs to the ABC transporter superfamily. Macrolide exporter (TC 3.A.1.122) family. In terms of assembly, homodimer.

It is found in the cell inner membrane. Its function is as follows. Non-canonical ABC transporter that contains transmembrane domains (TMD), which form a pore in the inner membrane, and an ATP-binding domain (NBD), which is responsible for energy generation. Confers resistance against macrolides. This chain is Macrolide export ATP-binding/permease protein MacB 1/2, found in Paracoccus denitrificans (strain Pd 1222).